The primary structure comprises 350 residues: Protein-glutamate methylesterase/protein-glutamine glutaminase (350 aa).

Positions 5-122 (TVLCVDDSAL…REGMLAYSEL (118 aa)) constitute a Response regulatory domain. Residue D56 is modified to 4-aspartylphosphate. A CheB-type methylesterase domain is found at 153 to 345 (LLSSEKLIAV…KRMLAKISSG (193 aa)). Residues S165, H191, and D287 contribute to the active site.

It belongs to the CheB family. In terms of processing, phosphorylated by CheA. Phosphorylation of the N-terminal regulatory domain activates the methylesterase activity.

The protein localises to the cytoplasm. The catalysed reaction is [protein]-L-glutamate 5-O-methyl ester + H2O = L-glutamyl-[protein] + methanol + H(+). It carries out the reaction L-glutaminyl-[protein] + H2O = L-glutamyl-[protein] + NH4(+). In terms of biological role, involved in chemotaxis. Part of a chemotaxis signal transduction system that modulates chemotaxis in response to various stimuli. Catalyzes the demethylation of specific methylglutamate residues introduced into the chemoreceptors (methyl-accepting chemotaxis proteins or MCP) by CheR. Also mediates the irreversible deamidation of specific glutamine residues to glutamic acid. This chain is Protein-glutamate methylesterase/protein-glutamine glutaminase, found in Photorhabdus laumondii subsp. laumondii (strain DSM 15139 / CIP 105565 / TT01) (Photorhabdus luminescens subsp. laumondii).